The sequence spans 1284 residues: Integrator complex subunit 6 (1284 aa).

Positions 3-134 (IILFLVDTSS…PSVIIVITDG (132 aa)) constitute a VWFA domain. Disordered stretches follow at residues 653-824 (DVAP…GMSN), 864-895 (ETGE…SPAV), 1053-1086 (TSSG…DDHA), and 1125-1180 (NNSS…PGQS). Residues 690–721 (SPGGGSGPGMPGMPGMGGGMSGLMLGAGGSGG) are compositionally biased toward gly residues. Composition is skewed to low complexity over residues 752–781 (DSRS…SSIS) and 803–824 (NSNS…GMSN). Polar residues predominate over residues 879–890 (GASSANEPSSIG). Composition is skewed to low complexity over residues 1053–1074 (TSSG…NGST) and 1125–1141 (NNSS…LSNN). Polar residues predominate over residues 1159-1171 (INSSCGSSPTHNN).

It belongs to the Integrator subunit 6 family. In terms of assembly, belongs to the multiprotein complex Integrator, at least composed of IntS1, IntS2, IntS3, IntS4, omd/IntS5, IntS6, defl/IntS7, IntS8, IntS9, IntS10, IntS11, IntS12, asun/IntS13, IntS14 and IntS15. The core complex associates with protein phosphatase 2A subunits mts/PP2A and Pp2A-29B, to form the Integrator-PP2A (INTAC) complex.

It localises to the nucleus. In terms of biological role, component of the integrator complex, a multiprotein complex that terminates RNA polymerase II (Pol II) transcription in the promoter-proximal region of genes. The integrator complex provides a quality checkpoint during transcription elongation by driving premature transcription termination of transcripts that are unfavorably configured for transcriptional elongation: the complex terminates transcription by (1) catalyzing dephosphorylation of the C-terminal domain (CTD) of Pol II subunit Polr2A/Rbp1 and Spt5, and (2) degrading the exiting nascent RNA transcript via endonuclease activity. The integrator complex is also involved in the 3'-end processing of the U7 snRNA, and also the spliceosomal snRNAs U1, U2, U4 and U5. Within the integrator complex, IntS6 acts as a substrate adapter for protein phosphatase 2A (PP2A). The chain is Integrator complex subunit 6 from Drosophila melanogaster (Fruit fly).